The sequence spans 114 residues: UPF0339 protein PM0519 (114 aa).

2 repeat units span residues 11–59 (AKDG…NFEV) and 62–110 (AKND…IKDL).

The protein belongs to the UPF0339 family. Duplicated subfamily.

This is UPF0339 protein PM0519 from Pasteurella multocida (strain Pm70).